The primary structure comprises 413 residues: Multifunctional CCA protein (413 aa).

ATP contacts are provided by Gly-8 and Arg-11. 2 residues coordinate CTP: Gly-8 and Arg-11. The Mg(2+) site is built by Asp-21 and Asp-23. ATP-binding residues include Arg-91, Arg-143, and Arg-146. Arg-91, Arg-143, and Arg-146 together coordinate CTP. An HD domain is found at 232–333; the sequence is TGVHVMMVVD…VRLFERSDAL (102 aa).

Belongs to the tRNA nucleotidyltransferase/poly(A) polymerase family. Bacterial CCA-adding enzyme type 1 subfamily. Monomer. Can also form homodimers and oligomers. Mg(2+) serves as cofactor. Ni(2+) is required as a cofactor.

The catalysed reaction is a tRNA precursor + 2 CTP + ATP = a tRNA with a 3' CCA end + 3 diphosphate. It carries out the reaction a tRNA with a 3' CCA end + 2 CTP + ATP = a tRNA with a 3' CCACCA end + 3 diphosphate. Its function is as follows. Catalyzes the addition and repair of the essential 3'-terminal CCA sequence in tRNAs without using a nucleic acid template. Adds these three nucleotides in the order of C, C, and A to the tRNA nucleotide-73, using CTP and ATP as substrates and producing inorganic pyrophosphate. tRNA 3'-terminal CCA addition is required both for tRNA processing and repair. Also involved in tRNA surveillance by mediating tandem CCA addition to generate a CCACCA at the 3' terminus of unstable tRNAs. While stable tRNAs receive only 3'-terminal CCA, unstable tRNAs are marked with CCACCA and rapidly degraded. The polypeptide is Multifunctional CCA protein (Burkholderia cenocepacia (strain ATCC BAA-245 / DSM 16553 / LMG 16656 / NCTC 13227 / J2315 / CF5610) (Burkholderia cepacia (strain J2315))).